Here is a 191-residue protein sequence, read N- to C-terminus: Molybdenum cofactor guanylyltransferase (191 aa).

Residues L13–G15, K26, D72, and D102 each bind GTP. D102 is a binding site for Mg(2+).

The protein belongs to the MobA family. In terms of assembly, monomer. Requires Mg(2+) as cofactor.

It is found in the cytoplasm. The enzyme catalyses Mo-molybdopterin + GTP + H(+) = Mo-molybdopterin guanine dinucleotide + diphosphate. Its function is as follows. Transfers a GMP moiety from GTP to Mo-molybdopterin (Mo-MPT) cofactor (Moco or molybdenum cofactor) to form Mo-molybdopterin guanine dinucleotide (Mo-MGD) cofactor. The chain is Molybdenum cofactor guanylyltransferase from Pseudomonas putida (Arthrobacter siderocapsulatus).